The primary structure comprises 95 residues: Small ribosomal subunit protein uS19 (95 aa).

Belongs to the universal ribosomal protein uS19 family.

In terms of biological role, protein S19 forms a complex with S13 that binds strongly to the 16S ribosomal RNA. This chain is Small ribosomal subunit protein uS19, found in Chloroflexus aurantiacus (strain ATCC 29366 / DSM 635 / J-10-fl).